Here is a 76-residue protein sequence, read N- to C-terminus: Dermaseptin-S7 (76 aa).

An N-terminal signal peptide occupies residues 1–22; sequence MDILKKSLFLVLFLGLISLSFC. Residues 23–45 constitute a propeptide that is removed on maturation; the sequence is EEEKRENEDEEEQEDDEQSEEKR. Residues 25–45 form a disordered region; the sequence is EKRENEDEEEQEDDEQSEEKR. Residues 30–41 show a composition bias toward acidic residues; sequence EDEEEQEDDEQS. Residue Gln73 is modified to Glutamine amide. A propeptide spanning residues 75 to 76 is cleaved from the precursor; sequence EQ.

This sequence belongs to the frog skin active peptide (FSAP) family. Dermaseptin subfamily. As to expression, expressed by the skin glands.

It localises to the secreted. Its function is as follows. Antimicrobial peptide. In Phyllomedusa sauvagei (Sauvage's leaf frog), this protein is Dermaseptin-S7.